We begin with the raw amino-acid sequence, 279 residues long: tRNA (carboxymethyluridine(34)-5-O)-methyltransferase (279 aa).

Residues 172-236 form a disordered region; the sequence is KSKSKPKTKS…QQQDQEQERE (65 aa). A compositionally biased stretch (basic and acidic residues) spans 200–229; that stretch reads PKERSEYLQRWKEEQQRSKSLDDNDEKQQQ.

As to quaternary structure, interacts with TRM112.

Its subcellular location is the cytoplasm. The protein resides in the nucleus. It catalyses the reaction 5-(carboxymethyl)uridine(34) in tRNA + S-adenosyl-L-methionine = 5-(2-methoxy-2-oxoethyl)uridine(34) in tRNA + S-adenosyl-L-homocysteine. In terms of biological role, required for the methylation of the wobble bases at position 34 in tRNA. Appears to have a role in stress-response. This is tRNA (carboxymethyluridine(34)-5-O)-methyltransferase (TRM9) from Saccharomyces cerevisiae (strain ATCC 204508 / S288c) (Baker's yeast).